A 370-amino-acid chain; its full sequence is A-type ATP synthase subunit C (370 aa).

The protein belongs to the V-ATPase V0D/AC39 subunit family. In terms of assembly, has multiple subunits with at least A(3), B(3), C, D, E, F, H, I and proteolipid K(x).

It is found in the cell membrane. Its function is as follows. Component of the A-type ATP synthase that produces ATP from ADP in the presence of a proton gradient across the membrane. This Pyrococcus abyssi (strain GE5 / Orsay) protein is A-type ATP synthase subunit C.